Reading from the N-terminus, the 187-residue chain is uncharacterized protein (187 aa).

The tract at residues Met1–Gly95 is disordered. Residues Arg46 to Lys80 are compositionally biased toward basic residues.

Its subcellular location is the mitochondrion. This is an uncharacterized protein from Arabidopsis thaliana (Mouse-ear cress).